Here is a 354-residue protein sequence, read N- to C-terminus: UDP-N-acetylglucosamine--N-acetylmuramyl-(pentapeptide) pyrophosphoryl-undecaprenol N-acetylglucosamine transferase (354 aa).

Residues T11–G13, R164, S194, and Q289 each bind UDP-N-acetyl-alpha-D-glucosamine.

This sequence belongs to the glycosyltransferase 28 family. MurG subfamily.

It is found in the cell membrane. It catalyses the reaction di-trans,octa-cis-undecaprenyl diphospho-N-acetyl-alpha-D-muramoyl-L-alanyl-D-glutamyl-meso-2,6-diaminopimeloyl-D-alanyl-D-alanine + UDP-N-acetyl-alpha-D-glucosamine = di-trans,octa-cis-undecaprenyl diphospho-[N-acetyl-alpha-D-glucosaminyl-(1-&gt;4)]-N-acetyl-alpha-D-muramoyl-L-alanyl-D-glutamyl-meso-2,6-diaminopimeloyl-D-alanyl-D-alanine + UDP + H(+). The protein operates within cell wall biogenesis; peptidoglycan biosynthesis. Cell wall formation. Catalyzes the transfer of a GlcNAc subunit on undecaprenyl-pyrophosphoryl-MurNAc-pentapeptide (lipid intermediate I) to form undecaprenyl-pyrophosphoryl-MurNAc-(pentapeptide)GlcNAc (lipid intermediate II). This Clostridium botulinum (strain 657 / Type Ba4) protein is UDP-N-acetylglucosamine--N-acetylmuramyl-(pentapeptide) pyrophosphoryl-undecaprenol N-acetylglucosamine transferase.